Here is a 61-residue protein sequence, read N- to C-terminus: Small ribosomal subunit protein uS14B (61 aa).

Zn(2+) is bound by residues Cys-24, Cys-27, Cys-40, and Cys-43.

This sequence belongs to the universal ribosomal protein uS14 family. Zinc-binding uS14 subfamily. In terms of assembly, part of the 30S ribosomal subunit. Contacts proteins S3 and S10. The cofactor is Zn(2+).

Binds 16S rRNA, required for the assembly of 30S particles and may also be responsible for determining the conformation of the 16S rRNA at the A site. In Mycolicibacterium smegmatis (strain ATCC 700084 / mc(2)155) (Mycobacterium smegmatis), this protein is Small ribosomal subunit protein uS14B.